Here is a 200-residue protein sequence, read N- to C-terminus: Protein GrpE (200 aa).

Composition is skewed to acidic residues over residues 1 to 17 and 34 to 44; these read MNEQ…EQFD and AFAEAGEETRD. The segment at 1 to 49 is disordered; sequence MNEQPNEELQSEDEQFDPQETVSFEGETAANDEAFAEAGEETRDEEMTR.

Belongs to the GrpE family. In terms of assembly, homodimer.

The protein resides in the cytoplasm. Its function is as follows. Participates actively in the response to hyperosmotic and heat shock by preventing the aggregation of stress-denatured proteins, in association with DnaK and GrpE. It is the nucleotide exchange factor for DnaK and may function as a thermosensor. Unfolded proteins bind initially to DnaJ; upon interaction with the DnaJ-bound protein, DnaK hydrolyzes its bound ATP, resulting in the formation of a stable complex. GrpE releases ADP from DnaK; ATP binding to DnaK triggers the release of the substrate protein, thus completing the reaction cycle. Several rounds of ATP-dependent interactions between DnaJ, DnaK and GrpE are required for fully efficient folding. The protein is Protein GrpE of Rhodopirellula baltica (strain DSM 10527 / NCIMB 13988 / SH1).